A 110-amino-acid polypeptide reads, in one-letter code: UPF0235 protein Mpop_2087 (110 aa).

The protein belongs to the UPF0235 family.

The sequence is that of UPF0235 protein Mpop_2087 from Methylorubrum populi (strain ATCC BAA-705 / NCIMB 13946 / BJ001) (Methylobacterium populi).